Consider the following 248-residue polypeptide: 3-deoxy-manno-octulosonate cytidylyltransferase (248 aa).

The protein belongs to the KdsB family.

Its subcellular location is the cytoplasm. The enzyme catalyses 3-deoxy-alpha-D-manno-oct-2-ulosonate + CTP = CMP-3-deoxy-beta-D-manno-octulosonate + diphosphate. It participates in nucleotide-sugar biosynthesis; CMP-3-deoxy-D-manno-octulosonate biosynthesis; CMP-3-deoxy-D-manno-octulosonate from 3-deoxy-D-manno-octulosonate and CTP: step 1/1. It functions in the pathway bacterial outer membrane biogenesis; lipopolysaccharide biosynthesis. Functionally, activates KDO (a required 8-carbon sugar) for incorporation into bacterial lipopolysaccharide in Gram-negative bacteria. This is 3-deoxy-manno-octulosonate cytidylyltransferase from Escherichia coli O139:H28 (strain E24377A / ETEC).